The following is a 1082-amino-acid chain: Neisserial autotransporter lipoprotein NalP (1082 aa).

The first 27 residues, 1-27, serve as a signal peptide directing secretion; sequence MRTTPTFPTKTFKPTAMALAVATTLSA. Residue cysteine 28 is the site of N-palmitoyl cysteine attachment. Residue cysteine 28 is the site of S-diacylglycerol cysteine attachment. Residues 110 to 482 enclose the Peptidase S8 domain; that stretch reads NDAYKNLINL…WGLLDAGKAM (373 aa). Catalysis depends on charge relay system residues aspartate 138, histidine 210, and serine 426. The Autotransporter domain occupies 808-1082; it reads DGLDHNGTGL…SGRVGVGYRF (275 aa).

This sequence belongs to the peptidase S8 family. Probably auto-processes to yield a 68-70 kDa form and a C-terminal 30 kDa translocator domain; upon overexpression in situ and in E.coli full-length protein is seen as well as (probably) auto-processed forms of 68-70 kDa and 30 kDa in size, suggesting this may have protease activity.

It is found in the cell outer membrane. It localises to the cell surface. The protein resides in the secreted. Its subcellular location is the host cytoplasm. The protein localises to the host perinuclear region. With respect to regulation, cleavage of host complement factor C3 is inhibited by PMSF. Functionally, major human immunogenic protein, detected in patients recovering from meningitidis. Autotransporter with a secreted protease domain involved in processing other autotransporter proteins including App, IgA, LbpB and NHBA. Probably autoprocesses to release the about 70 kDa passenger domain. Both cell surface protein (Neisserial autotransporter lipoprotein NalP) and the passenger domain cleave human (host) complement factor C3, generating a shorter alpha chain and a longer beta chain than normal. Uptake of a passenger domain fragment (residues 101-784) by human cells increases cell metabolic activity; the serine protease activity is required for this increase. Cleaves human (host) complement factor C3, generating a shorter alpha chain and a longer beta chain than normal. Does not act on mouse or rabbit C3. Cleavage causes C3b degradation by human CFI and CFH, and thus decreases deposition of C3b on the bacteria surface and probably facilitates complement escape. Its function is as follows. Plays a role in extracellular-DNA (eDNA) mediated biofilm formation. In some strains (including cc32 strain MC58) eDNA stimulates biofilm formation. When NalP is not expressed (and no longer processes NHBA or IgA) biofilm formation increases. This chain is Neisserial autotransporter lipoprotein NalP, found in Neisseria meningitidis serogroup B (strain ATCC BAA-335 / MC58).